A 335-amino-acid chain; its full sequence is Acetyl-coenzyme A carboxylase carboxyl transferase subunit alpha (335 aa).

The CoA carboxyltransferase C-terminal domain maps to 40–294 (QLETLAARRR…KEAIEKHLNA (255 aa)).

The protein belongs to the AccA family. Acetyl-CoA carboxylase is a heterohexamer composed of biotin carboxyl carrier protein (AccB), biotin carboxylase (AccC) and two subunits each of ACCase subunit alpha (AccA) and ACCase subunit beta (AccD).

Its subcellular location is the cytoplasm. The enzyme catalyses N(6)-carboxybiotinyl-L-lysyl-[protein] + acetyl-CoA = N(6)-biotinyl-L-lysyl-[protein] + malonyl-CoA. The protein operates within lipid metabolism; malonyl-CoA biosynthesis; malonyl-CoA from acetyl-CoA: step 1/1. Functionally, component of the acetyl coenzyme A carboxylase (ACC) complex. First, biotin carboxylase catalyzes the carboxylation of biotin on its carrier protein (BCCP) and then the CO(2) group is transferred by the carboxyltransferase to acetyl-CoA to form malonyl-CoA. The protein is Acetyl-coenzyme A carboxylase carboxyl transferase subunit alpha of Prochlorococcus marinus (strain MIT 9301).